We begin with the raw amino-acid sequence, 320 residues long: NAC domain-containing protein 20 (320 aa).

The NAC domain occupies 14–170 (LPPGFRFHPT…DWAVCRIFHK (157 aa)). A DNA-binding region spans residues 114–176 (IGMKKTLVFY…IFHKSSGIKK (63 aa)).

In terms of assembly, forms homodimers. Forms heterodimers with NAC26. As to expression, expressed in developing seeds.

The protein resides in the nucleus. The protein localises to the endoplasmic reticulum. Its function is as follows. Transcription factor that acts redundantly with NAC26 to regulate the expression of genes involved in the biosynthesis of starch and storage proteins in grain. Directly binds to the promoters of starch synthase 1 (SS1), pullulanase (PUL), glutelin A1 (GLUA1), glutelins B4 and B5 (GLUB4 and GLUB5), alpha-globulin and 16 kDa prolamin, and activates their expression. Possesses transactivation activity in yeast. The sequence is that of NAC domain-containing protein 20 from Oryza sativa subsp. indica (Rice).